Consider the following 426-residue polypeptide: Diaminobutyrate--2-oxoglutarate transaminase (426 aa).

Lys-274 bears the N6-(pyridoxal phosphate)lysine mark.

It belongs to the class-III pyridoxal-phosphate-dependent aminotransferase family. Requires pyridoxal 5'-phosphate as cofactor.

The catalysed reaction is L-2,4-diaminobutanoate + 2-oxoglutarate = L-aspartate 4-semialdehyde + L-glutamate. It participates in amine and polyamine biosynthesis; ectoine biosynthesis; L-ectoine from L-aspartate 4-semialdehyde: step 1/3. Its function is as follows. Catalyzes reversively the conversion of L-aspartate beta-semialdehyde (ASA) to L-2,4-diaminobutyrate (DABA) by transamination with L-glutamate. In Oceanobacillus iheyensis (strain DSM 14371 / CIP 107618 / JCM 11309 / KCTC 3954 / HTE831), this protein is Diaminobutyrate--2-oxoglutarate transaminase (ectB).